The primary structure comprises 297 residues: Acetylglutamate kinase (297 aa).

Substrate contacts are provided by residues 72–73, Arg-94, and Asn-193; that span reads GG.

This sequence belongs to the acetylglutamate kinase family. ArgB subfamily.

The protein resides in the cytoplasm. It carries out the reaction N-acetyl-L-glutamate + ATP = N-acetyl-L-glutamyl 5-phosphate + ADP. The protein operates within amino-acid biosynthesis; L-arginine biosynthesis; N(2)-acetyl-L-ornithine from L-glutamate: step 2/4. In terms of biological role, catalyzes the ATP-dependent phosphorylation of N-acetyl-L-glutamate. This Mycobacterium leprae (strain TN) protein is Acetylglutamate kinase.